Reading from the N-terminus, the 212-residue chain is Riboflavin kinase (212 aa).

The segment at 1 to 87 (MKMKTLFLLI…YEEISTALYS (87 aa)) is H-T-H motif-like. The segment at 88–212 (GFIVGEVISG…DGDKVRIEVV (125 aa)) is riboflavin kinase. Position 97–102 (97–102 (GIGEGA)) interacts with CDP. Residues T124 and N126 each contribute to the Mg(2+) site. FMN-binding residues include T180 and E188. Position 193-196 (193-196 (VKLR)) interacts with CDP.

It belongs to the archaeal riboflavin kinase family. Mg(2+) is required as a cofactor.

The enzyme catalyses riboflavin + CTP = CDP + FMN + H(+). The protein operates within cofactor biosynthesis; FMN biosynthesis; FMN from riboflavin (CTP route): step 1/1. In terms of biological role, catalyzes the CTP-dependent phosphorylation of riboflavin (vitamin B2) to form flavin mononucleotide (FMN). This Pyrococcus abyssi (strain GE5 / Orsay) protein is Riboflavin kinase (ribK).